A 240-amino-acid polypeptide reads, in one-letter code: Serine protease SplB (240 aa).

The N-terminal stretch at 1-36 (MNKNVVIKSLAALTILTSVTGIGITLVEEVQQTAKA) is a signal peptide. Residues His-75, Asp-113, and Ser-193 each act as charge relay system in the active site.

Belongs to the peptidase S1B family.

The protein localises to the secreted. In terms of biological role, serine protease that cleaves specifically after the sequence Trp-Glu-Leu-Gln. The sequence is that of Serine protease SplB (splB) from Staphylococcus aureus (strain MW2).